The sequence spans 222 residues: DnaJ homolog subfamily B member 9 (222 aa).

Residues 1–23 (MATPQSVFVFAICILMITELILA) form the signal peptide. The J domain occupies 26–90 (SYYDILGVPK…HRRKEYDTVG (65 aa)). Residues 91–222 (HTAFTNGKGQ…VTTYTDCSGQ (132 aa)) are divergent targeting domain. Residue serine 133 is modified to Phosphoserine.

In terms of assembly, interacts with HSPA5/BiP; interaction is direct. Interacts with ERN1/IRE1 (via the luminal region). Interacts with DERL1.

It localises to the endoplasmic reticulum lumen. Its function is as follows. Co-chaperone for Hsp70 protein HSPA5/BiP that acts as a key repressor of the ERN1/IRE1-mediated unfolded protein response (UPR). J domain-containing co-chaperones stimulate the ATPase activity of Hsp70 proteins and are required for efficient substrate recognition by Hsp70 proteins. In the unstressed endoplasmic reticulum, interacts with the luminal region of ERN1/IRE1 and selectively recruits HSPA5/BiP: HSPA5/BiP disrupts the dimerization of the active ERN1/IRE1 luminal region, thereby inactivating ERN1/IRE1. Also involved in endoplasmic reticulum-associated degradation (ERAD) of misfolded proteins. Required for survival of B-cell progenitors and normal antibody production. The polypeptide is DnaJ homolog subfamily B member 9 (Cricetulus griseus (Chinese hamster)).